Here is a 350-residue protein sequence, read N- to C-terminus: Deoxyhypusine synthase-like protein (350 aa).

Belongs to the deoxyhypusine synthase family.

This Chlorobaculum parvum (strain DSM 263 / NCIMB 8327) (Chlorobium vibrioforme subsp. thiosulfatophilum) protein is Deoxyhypusine synthase-like protein.